A 147-amino-acid polypeptide reads, in one-letter code: Hemoglobin subunit beta-M (147 aa).

Val2 is subject to N-acetylvaline. Residues 3–147 enclose the Globin domain; sequence HLTSEEKNCI…VAHALAHKYH (145 aa). Thr13 bears the Phosphothreonine mark. Phosphoserine is present on Ser45. An N6-acetyllysine modification is found at Lys60. Residue His64 participates in heme b binding. N6-acetyllysine is present on Lys83. A heme b-binding site is contributed by His93. The residue at position 94 (Cys94) is an S-nitrosocysteine. Residue Lys145 is modified to N6-acetyllysine.

It belongs to the globin family. In terms of assembly, heterotetramer of two alpha chains and two beta chains. In terms of tissue distribution, red blood cells.

Functionally, involved in oxygen transport from the lung to the various peripheral tissues. The chain is Hemoglobin subunit beta-M (HBB) from Didelphis virginiana (North American opossum).